The chain runs to 501 residues: Cytochrome P450 monooxygenase notH (501 aa).

The chain crosses the membrane as a helical span at residues 11-31 (LGLESVGWVLGLLTTSILYLF). A glycan (N-linked (GlcNAc...) asparagine) is linked at asparagine 298. Cysteine 442 contributes to the heme binding site.

The protein belongs to the cytochrome P450 family. Heme serves as cofactor.

It localises to the membrane. The protein operates within alkaloid biosynthesis. Cytochrome P450 monooxygenase; part of the gene cluster that mediates the biosynthesis of notoamide, a fungal indole alkaloid that belongs to a family of natural products containing a characteristic bicyclo[2.2.2]diazaoctane core. The first step of notoamide biosynthesis involves coupling of L-proline and L-tryptophan by the bimodular NRPS notE, to produce cyclo-L-tryptophan-L-proline called brevianamide F. The reverse prenyltransferase notF then acts as a deoxybrevianamide E synthase and converts brevianamide F to deoxybrevianamide E via reverse prenylation at C-2 of the indole ring leading to the bicyclo[2.2.2]diazaoctane core. Deoxybrevianamide E is further hydroxylated at C-6 of the indole ring, likely catalyzed by the cytochrome P450 monooxygenase notG, to yield 6-hydroxy-deoxybrevianamide E. 6-hydroxy-deoxybrevianamide E is a specific substrate of the prenyltransferase notC for normal prenylation at C-7 to produce 6-hydroxy-7-prenyl-deoxybrevianamide, also called notoamide S. As the proposed pivotal branching point in notoamide biosynthesis, notoamide S can be diverted to notoamide E through an oxidative pyran ring closure putatively catalyzed by either notH cytochrome P450 monooxygenase or the notD FAD-linked oxidoreductase. This step would be followed by an indole 2,3-epoxidation-initiated pinacol-like rearrangement catalyzed by the notB FAD-dependent monooxygenase leading to the formation of notoamide C and notoamide D. On the other hand notoamide S is converted to notoamide T by notH (or notD), a bifunctional oxidase that also functions as the intramolecular Diels-Alderase responsible for generation of (+)-notoamide T. To generate antipodal (-)-notoaminide T, notH' (or notD') in Aspergillus versicolor is expected to catalyze a Diels-Alder reaction leading to the opposite stereochemistry. The remaining oxidoreductase notD (or notH) likely catalyzes the oxidative pyran ring formation to yield (+)-stephacidin A. The FAD-dependent monooxygenase notI is highly similar to notB and is predicted to catalyze a similar conversion from (+)-stephacidin A to (-)-notoamide B via the 2,3-epoxidation of (+)-stephacidin A followed by a pinacol-type rearrangement. Finally, it remains unclear which enzyme could be responsible for the final hydroxylation steps leading to notoamide A and sclerotiamide. This is Cytochrome P450 monooxygenase notH from Aspergillus sp. (strain MF297-2).